The chain runs to 122 residues: Large ribosomal subunit protein uL14 (122 aa).

The protein belongs to the universal ribosomal protein uL14 family. In terms of assembly, part of the 50S ribosomal subunit. Forms a cluster with proteins L3 and L19. In the 70S ribosome, L14 and L19 interact and together make contacts with the 16S rRNA in bridges B5 and B8.

Its function is as follows. Binds to 23S rRNA. Forms part of two intersubunit bridges in the 70S ribosome. In Mesorhizobium japonicum (strain LMG 29417 / CECT 9101 / MAFF 303099) (Mesorhizobium loti (strain MAFF 303099)), this protein is Large ribosomal subunit protein uL14.